Consider the following 500-residue polypeptide: ATP synthase subunit alpha (500 aa).

Residue 169–176 (GDRQTGKT) coordinates ATP.

The protein belongs to the ATPase alpha/beta chains family. In terms of assembly, F-type ATPases have 2 components, CF(1) - the catalytic core - and CF(0) - the membrane proton channel. CF(1) has five subunits: alpha(3), beta(3), gamma(1), delta(1), epsilon(1). CF(0) has three main subunits: a(1), b(2) and c(9-12). The alpha and beta chains form an alternating ring which encloses part of the gamma chain. CF(1) is attached to CF(0) by a central stalk formed by the gamma and epsilon chains, while a peripheral stalk is formed by the delta and b chains.

The protein localises to the cell membrane. The enzyme catalyses ATP + H2O + 4 H(+)(in) = ADP + phosphate + 5 H(+)(out). Produces ATP from ADP in the presence of a proton gradient across the membrane. The alpha chain is a regulatory subunit. In Clostridioides difficile (strain 630) (Peptoclostridium difficile), this protein is ATP synthase subunit alpha.